The chain runs to 831 residues: Prickle-like protein 1 (831 aa).

One can recognise a PET domain in the interval 14-122; that stretch reads FGCQRSSTSD…TIKLLSRAMM (109 aa). LIM zinc-binding domains lie at 124–189, 189–249, and 249–313; these read AVCE…LLKP, PRCS…LYAE, and EYCE…EDIH. The segment at 314–346 is disordered; the sequence is ASDSSDSAFQSARSRDSRRSVRMGRSSRSADQC. A phosphoserine mark is found at serine 315, serine 591, and serine 594. Disordered regions lie at residues 664 to 688 and 763 to 831; these read EERG…NALN and CSSS…CIIS. A compositionally biased stretch (basic residues) spans 669–680; the sequence is RPHHHRHRRSRK. A Phosphoserine modification is found at serine 683. Positions 797–812 are enriched in polar residues; the sequence is DLSSPASALPTPQFNQ. Residues 815–831 show a composition bias toward basic residues; it reads TKSKKKKGHRGKNCIIS. Cysteine 828 carries the post-translational modification Cysteine methyl ester. Residue cysteine 828 is the site of S-farnesyl cysteine attachment. Positions 829 to 831 are cleaved as a propeptide — removed in mature form; it reads IIS.

It belongs to the prickle / espinas / testin family. In terms of assembly, interacts with REST.

It localises to the nucleus membrane. Its subcellular location is the cytoplasm. The protein resides in the cytosol. Involved in the planar cell polarity pathway that controls convergent extension during gastrulation and neural tube closure. Convergent extension is a complex morphogenetic process during which cells elongate, move mediolaterally, and intercalate between neighboring cells, leading to convergence toward the mediolateral axis and extension along the anteroposterior axis. Necessary for nuclear localization of REST. May serve as nuclear receptor. This chain is Prickle-like protein 1 (Prickle1), found in Rattus norvegicus (Rat).